Reading from the N-terminus, the 316-residue chain is Pantothenate kinase (316 aa).

ATP is bound at residue 95–102; sequence GSVAVGKS.

The protein belongs to the prokaryotic pantothenate kinase family.

The protein localises to the cytoplasm. It carries out the reaction (R)-pantothenate + ATP = (R)-4'-phosphopantothenate + ADP + H(+). It functions in the pathway cofactor biosynthesis; coenzyme A biosynthesis; CoA from (R)-pantothenate: step 1/5. This chain is Pantothenate kinase, found in Shewanella pealeana (strain ATCC 700345 / ANG-SQ1).